Here is a 459-residue protein sequence, read N- to C-terminus: MLKIHNSLTGAKEPFQPIEPGQVRIYVCGMTVYDFCHLGHARALVVFDAVVRYLRWLGYEVTYVRNITDIDDKIIRRAAENGEPMTALTDRFIRAMHEDCSALGVEPPDHEPRATERLESMIALIEELIAGGHAYVGDNGDVYFSVASFPEYGKLSGRRVEELRSGSRIEPDEAKHDPVDFVLWKAAKSGEPAWPSPWGDGRPGWHIECSAMSRDLLGSHFDIHGGGVDLQFPHHENEIAQSECASGHRFVNYWMHNGHVRIDDEKMAKSLGNFFTVRDVLAEHPAEVVRLFLLSSHYRSPLNYTGDALDEARGGLERLYNALRGLPAAAPARSQARERFREAMDDDFNTREALAVLFDGAREINRLREAGDASGAASAAAELRELGAVLGLLQQDPEAYLRGDVADAEAEEIESLVAQRTAARKAKDFAEADRIRDELQARGIELEDTPEGTKWRRTR.

Cys-28 provides a ligand contact to Zn(2+). Positions 30–40 match the 'HIGH' region motif; it reads MTVYDFCHLGH. 3 residues coordinate Zn(2+): Cys-209, His-234, and Glu-238. A 'KMSKS' region motif is present at residues 266–270; that stretch reads KMAKS. An ATP-binding site is contributed by Lys-269. Residues 440–459 are disordered; that stretch reads QARGIELEDTPEGTKWRRTR.

Belongs to the class-I aminoacyl-tRNA synthetase family. As to quaternary structure, monomer. Zn(2+) serves as cofactor.

It is found in the cytoplasm. The enzyme catalyses tRNA(Cys) + L-cysteine + ATP = L-cysteinyl-tRNA(Cys) + AMP + diphosphate. This is Cysteine--tRNA ligase from Halorhodospira halophila (strain DSM 244 / SL1) (Ectothiorhodospira halophila (strain DSM 244 / SL1)).